The chain runs to 425 residues: MQTISPAFSCDLKSVIQPNLTAKKARYSHVNGKRVSVRCSYRSESFSFPNGVGSSRADWQSSCAILASKVVSAENSSSVAVVNGHSNGSVDLSLVPSKSQHNGKPGLIQPLTITDLSPAPSHGSTLRVAYQGVPGAYSEAAAGKAYPNSEAIPCDQFDVAFQAVELWIADRAVLPVENSLGGSIHRNYDLLLRHRLHIVGEVQIPVHHCLLALPGVRTDCITRVISHPQALAQTEGSLNKLTPKAAIEAFHDTAAAAEYIAANNLHDTAAVASARAAELYGLQILADGIQDDAGNVTRFLMLARDPIIPRTDRPFKTSIVFAAQEHKGTSVLFKVLSAFAFRNISLTKIESRPHQNCPVRVVGDENVGTSKHFEYTFYVDFEASMAEARAQNALAEVQEYTSFLRVLGSYPMDMTPWSTLPSEDV.

The transit peptide at 1-38 directs the protein to the chloroplast; that stretch reads MQTISPAFSCDLKSVIQPNLTAKKARYSHVNGKRVSVR. A Prephenate dehydratase domain is found at 127–304; sequence RVAYQGVPGA…NVTRFLMLAR (178 aa). Residues 320 to 411 enclose the ACT domain; sequence VFAAQEHKGT…SFLRVLGSYP (92 aa).

As to expression, expressed in roots, leaves, stems, flowers and siliques. More abundant in stems and roots.

The protein resides in the plastid. Its subcellular location is the chloroplast stroma. It carries out the reaction L-arogenate + H(+) = L-phenylalanine + CO2 + H2O. It participates in amino-acid biosynthesis; L-phenylalanine biosynthesis; L-phenylalanine from L-arogenate: step 1/1. Its function is as follows. Converts the prephenate produced from the shikimate-chorismate pathway into phenylalanine. In Arabidopsis thaliana (Mouse-ear cress), this protein is Arogenate dehydratase 5, chloroplastic.